Reading from the N-terminus, the 432-residue chain is Enolase (432 aa).

Q163 provides a ligand contact to (2R)-2-phosphoglycerate. The active-site Proton donor is E205. Residues D242, E285, and D312 each contribute to the Mg(2+) site. The (2R)-2-phosphoglycerate site is built by K337, R366, S367, and K388. K337 acts as the Proton acceptor in catalysis.

This sequence belongs to the enolase family. Requires Mg(2+) as cofactor.

The protein resides in the cytoplasm. It localises to the secreted. It is found in the cell surface. The enzyme catalyses (2R)-2-phosphoglycerate = phosphoenolpyruvate + H2O. It functions in the pathway carbohydrate degradation; glycolysis; pyruvate from D-glyceraldehyde 3-phosphate: step 4/5. Its function is as follows. Catalyzes the reversible conversion of 2-phosphoglycerate (2-PG) into phosphoenolpyruvate (PEP). It is essential for the degradation of carbohydrates via glycolysis. The protein is Enolase of Bifidobacterium longum (strain DJO10A).